The chain runs to 536 residues: MAVASKKIPAPDEVRIKTALLSVSDKTGIVELARALNDKGIRLISTGGTHKALADAGLPVSDVSELTGFPEIMDGRVKTLHPGVHGGLLAIRDDAEHADAMSAHGITAIDLAVINLYPFEEVRAKGGDYPTTVENIDIGGPAMIRASAKNHAYVTIVTDPADYSPLLEEIADGATRYAFRQKMAAKAYARTAAYDATISNWFAEVLDTPMPRHRVLGGLLREEMRYGENPHQKAGFYVTGEKRPGVATAALLQGKQLSYNNINDTDAAFELVAEFLPEKAPACAIIKHANPCGVATAPSLAEAYRRALACDSTSAFGGIIALNQELDAETAEEIVKLFTEVIIAPSVSDDAKAVIARKPNLRLLAAGGLPDPRTPGLTAKTVAGGVLVQTRDNGMVEDLELKVVTKRAPTAQELEDMKFAFKVAKHVKSNAIVYAKDGQTAGIGAGQMSRVDSARIAAIKAEEAAKAMGLAEPLTRGSAVASEAFLPFADGLLSAIAAGATAVIQPGGSMRDEEVIAAANEHDVAMVFTGMRHFRH.

The MGS-like domain maps to 8-158 (IPAPDEVRIK…KNHAYVTIVT (151 aa)).

Belongs to the PurH family.

It carries out the reaction (6R)-10-formyltetrahydrofolate + 5-amino-1-(5-phospho-beta-D-ribosyl)imidazole-4-carboxamide = 5-formamido-1-(5-phospho-D-ribosyl)imidazole-4-carboxamide + (6S)-5,6,7,8-tetrahydrofolate. The enzyme catalyses IMP + H2O = 5-formamido-1-(5-phospho-D-ribosyl)imidazole-4-carboxamide. It participates in purine metabolism; IMP biosynthesis via de novo pathway; 5-formamido-1-(5-phospho-D-ribosyl)imidazole-4-carboxamide from 5-amino-1-(5-phospho-D-ribosyl)imidazole-4-carboxamide (10-formyl THF route): step 1/1. Its pathway is purine metabolism; IMP biosynthesis via de novo pathway; IMP from 5-formamido-1-(5-phospho-D-ribosyl)imidazole-4-carboxamide: step 1/1. This Rhizobium meliloti (strain 1021) (Ensifer meliloti) protein is Bifunctional purine biosynthesis protein PurH.